Here is a 202-residue protein sequence, read N- to C-terminus: ATP-dependent Clp protease proteolytic subunit (202 aa).

Residue Ser-101 is the Nucleophile of the active site. His-126 is a catalytic residue.

This sequence belongs to the peptidase S14 family. In terms of assembly, component of the chloroplastic Clp protease core complex.

It is found in the plastid. Its subcellular location is the chloroplast stroma. It carries out the reaction Hydrolysis of proteins to small peptides in the presence of ATP and magnesium. alpha-casein is the usual test substrate. In the absence of ATP, only oligopeptides shorter than five residues are hydrolyzed (such as succinyl-Leu-Tyr-|-NHMec, and Leu-Tyr-Leu-|-Tyr-Trp, in which cleavage of the -Tyr-|-Leu- and -Tyr-|-Trp bonds also occurs).. Functionally, cleaves peptides in various proteins in a process that requires ATP hydrolysis. Has a chymotrypsin-like activity. Plays a major role in the degradation of misfolded proteins. The polypeptide is ATP-dependent Clp protease proteolytic subunit (Buxus microphylla (Littleleaf boxwood)).